The primary structure comprises 407 residues: Phosphopentomutase (407 aa).

Residues Asp10, Asp306, His311, Asp347, His348, and His359 each coordinate Mn(2+).

Belongs to the phosphopentomutase family. The cofactor is Mn(2+).

The protein localises to the cytoplasm. It catalyses the reaction 2-deoxy-alpha-D-ribose 1-phosphate = 2-deoxy-D-ribose 5-phosphate. The enzyme catalyses alpha-D-ribose 1-phosphate = D-ribose 5-phosphate. It functions in the pathway carbohydrate degradation; 2-deoxy-D-ribose 1-phosphate degradation; D-glyceraldehyde 3-phosphate and acetaldehyde from 2-deoxy-alpha-D-ribose 1-phosphate: step 1/2. Functionally, isomerase that catalyzes the conversion of deoxy-ribose 1-phosphate (dRib-1-P) and ribose 1-phosphate (Rib-1-P) to deoxy-ribose 5-phosphate (dRib-5-P) and ribose 5-phosphate (Rib-5-P), respectively. This is Phosphopentomutase from Salmonella schwarzengrund (strain CVM19633).